Here is a 551-residue protein sequence, read N- to C-terminus: Scaffold protein D13 ortholog (551 aa).

Belongs to the poxviridae protein D13 family. Homotrimer. Self-assembles to form a layer. Interacts with A17 (via N-terminus); this interaction is necessary for D13 association with membranes.

It localises to the membrane. Its function is as follows. Scaffold protein which forms a transitory spherical honeycomb lattice providing curvature and rigidity to the convex membrane of crescent and immature virions (IV). This association occurs concomitantly with viral membrane formation. Targeted by the drug rifampicin, which prevents the formation of this lattice, and hence virus morphogenesis. In the presence of rifampicin, irregularly shaped membranes that lack the honeycomb layer accumulate around areas of electron-dense viroplasm. This layer is lost from virions during maturation from IV to mature virion (MV), through the proteolysis of A17 N-terminus. The polypeptide is Scaffold protein D13 ortholog (Sus scrofa (Pig)).